The sequence spans 97 residues: Large ribosomal subunit protein eL21 (97 aa).

Belongs to the eukaryotic ribosomal protein eL21 family.

The chain is Large ribosomal subunit protein eL21 from Methanoculleus marisnigri (strain ATCC 35101 / DSM 1498 / JR1).